The chain runs to 92 residues: PqqA binding protein (92 aa).

Belongs to the PqqD family. In terms of assembly, monomer. Interacts with PqqE.

The protein operates within cofactor biosynthesis; pyrroloquinoline quinone biosynthesis. Functions as a PqqA binding protein and presents PqqA to PqqE, in the pyrroloquinoline quinone (PQQ) biosynthetic pathway. In Xanthomonas campestris pv. campestris (strain B100), this protein is PqqA binding protein.